Here is a 270-residue protein sequence, read N- to C-terminus: uncharacterized protein (270 aa).

The signal sequence occupies residues 1–22 (MEYIKKIALYMSVLLLIIFIGG). C23 carries N-palmitoyl cysteine lipidation. C23 carries S-diacylglycerol cysteine lipidation.

Belongs to the staphylococcal tandem lipoprotein family.

Its subcellular location is the cell membrane. This is an uncharacterized protein from Staphylococcus aureus (strain N315).